Here is a 333-residue protein sequence, read N- to C-terminus: MESLFLLVLGNTEISTVPGISVAGATPELTKLTPVADAEYLFHEKPLTIDVIPVTPEGHPTPAIITKAARELANFPVLVVRGGTYLAPLVPHVHISDAVGRDFRKEPALPEFGDIIKRAKLFGEELNKTPIKELVIGESTPGGTTTAQAVLWALGYEARTSSASPDNPQSLKEKVIAEAFERAGIEKGQLRDNPLEALRQFGDPMMATVIGIALGFRRDIVLAGGTQMLAVSALLKALGEDLSRFMIATTKWVANDKSATFIETAKEIGIISYAADLDFSKSEFKGLRDYERGYVKEGVGAGGATWLAVKAGFSPEDVSEKVEELYRRLMEMK.

Belongs to the UPF0284 family.

The polypeptide is UPF0284 protein TGAM_0534 (Thermococcus gammatolerans (strain DSM 15229 / JCM 11827 / EJ3)).